We begin with the raw amino-acid sequence, 609 residues long: UvrABC system protein C (609 aa).

One can recognise a GIY-YIG domain in the interval 15–92 (TGSGVYQMQD…IKQFRPRYNV (78 aa)). A UVR domain is found at 202-237 (DQVIIKLTERMEVASENLVFEEAAHYRDQIRQLRRL).

It belongs to the UvrC family. In terms of assembly, interacts with UvrB in an incision complex.

It is found in the cytoplasm. Its function is as follows. The UvrABC repair system catalyzes the recognition and processing of DNA lesions. UvrC both incises the 5' and 3' sides of the lesion. The N-terminal half is responsible for the 3' incision and the C-terminal half is responsible for the 5' incision. This chain is UvrABC system protein C, found in Coxiella burnetii (strain RSA 331 / Henzerling II).